A 30-amino-acid polypeptide reads, in one-letter code: Neurotoxin II.22.5 (30 aa).

The LCN-type CS-alpha/beta domain occupies 1–30; the sequence is KEGYIVNYHTGCKYTCAKLGDNDYCLRECK.

The protein belongs to the long (4 C-C) scorpion toxin superfamily. Sodium channel inhibitor family. Beta subfamily. As to expression, expressed by the venom gland.

The protein localises to the secreted. Functionally, binds to sodium channels (Nav) and inhibits the inactivation of the activated channels, thereby blocking neuronal transmission. The protein is Neurotoxin II.22.5 of Centruroides tecomanus (Scorpion).